We begin with the raw amino-acid sequence, 349 residues long: Homeobox-leucine zipper protein HOX7 (349 aa).

Residues 42-186 are disordered; it reads RATRRDEQDD…PKQKSDLANR (145 aa). 2 stretches are compositionally biased toward polar residues: residues 89 to 99 and 121 to 135; these read SAETGSANSEM and SSPSSMQEASTRQQV. The homeobox DNA-binding region spans 150 to 209; it reads GARKKLRLSKEQSSFLEDSFKEHSTLTPKQKSDLANRLNLRPRQVEVWFQNRRARTKLKQ. Over residues 167 to 183 the composition is skewed to basic and acidic residues; the sequence is DSFKEHSTLTPKQKSDL. Residues 208-252 are leucine-zipper; it reads KQTEVDCEHLKRCCERLTRENRRLQREVAELRGALRTTTSSYPPL.

Belongs to the HD-ZIP homeobox family. Class II subfamily. In terms of assembly, homodimer. May form a heterodimer with HOX1, HOX2 or HOX3. In terms of tissue distribution, expressed in seedlings, roots, leaves, nodes, internodes, flowers and embryo.

The protein resides in the nucleus. In terms of biological role, probable transcription factor that binds to the DNA sequence 5'-CAAT[GC]ATTG-3'. This Oryza sativa subsp. indica (Rice) protein is Homeobox-leucine zipper protein HOX7 (HOX7).